The primary structure comprises 188 residues: Protein GrpE (188 aa).

The protein belongs to the GrpE family. As to quaternary structure, homodimer.

Its subcellular location is the cytoplasm. Participates actively in the response to hyperosmotic and heat shock by preventing the aggregation of stress-denatured proteins, in association with DnaK and GrpE. It is the nucleotide exchange factor for DnaK and may function as a thermosensor. Unfolded proteins bind initially to DnaJ; upon interaction with the DnaJ-bound protein, DnaK hydrolyzes its bound ATP, resulting in the formation of a stable complex. GrpE releases ADP from DnaK; ATP binding to DnaK triggers the release of the substrate protein, thus completing the reaction cycle. Several rounds of ATP-dependent interactions between DnaJ, DnaK and GrpE are required for fully efficient folding. The protein is Protein GrpE of Chromobacterium violaceum (strain ATCC 12472 / DSM 30191 / JCM 1249 / CCUG 213 / NBRC 12614 / NCIMB 9131 / NCTC 9757 / MK).